Consider the following 302-residue polypeptide: Sulfate adenylyltransferase subunit 2 (302 aa).

This sequence belongs to the PAPS reductase family. CysD subfamily. Heterodimer composed of CysD, the smaller subunit, and CysN.

It carries out the reaction sulfate + ATP + H(+) = adenosine 5'-phosphosulfate + diphosphate. It functions in the pathway sulfur metabolism; hydrogen sulfide biosynthesis; sulfite from sulfate: step 1/3. Functionally, with CysN forms the ATP sulfurylase (ATPS) that catalyzes the adenylation of sulfate producing adenosine 5'-phosphosulfate (APS) and diphosphate, the first enzymatic step in sulfur assimilation pathway. APS synthesis involves the formation of a high-energy phosphoric-sulfuric acid anhydride bond driven by GTP hydrolysis by CysN coupled to ATP hydrolysis by CysD. The polypeptide is Sulfate adenylyltransferase subunit 2 (Parabacteroides distasonis (strain ATCC 8503 / DSM 20701 / CIP 104284 / JCM 5825 / NCTC 11152)).